The sequence spans 142 residues: Large ribosomal subunit protein uL13 (142 aa).

It belongs to the universal ribosomal protein uL13 family. In terms of assembly, part of the 50S ribosomal subunit.

Its function is as follows. This protein is one of the early assembly proteins of the 50S ribosomal subunit, although it is not seen to bind rRNA by itself. It is important during the early stages of 50S assembly. In Serratia proteamaculans (strain 568), this protein is Large ribosomal subunit protein uL13.